A 236-amino-acid chain; its full sequence is 2-C-methyl-D-erythritol 4-phosphate cytidylyltransferase (236 aa).

This sequence belongs to the IspD/TarI cytidylyltransferase family. IspD subfamily. Homodimer.

The enzyme catalyses 2-C-methyl-D-erythritol 4-phosphate + CTP + H(+) = 4-CDP-2-C-methyl-D-erythritol + diphosphate. It participates in isoprenoid biosynthesis; isopentenyl diphosphate biosynthesis via DXP pathway; isopentenyl diphosphate from 1-deoxy-D-xylulose 5-phosphate: step 2/6. Its function is as follows. Catalyzes the formation of 4-diphosphocytidyl-2-C-methyl-D-erythritol from CTP and 2-C-methyl-D-erythritol 4-phosphate (MEP). This is 2-C-methyl-D-erythritol 4-phosphate cytidylyltransferase from Escherichia coli O7:K1 (strain IAI39 / ExPEC).